We begin with the raw amino-acid sequence, 73 residues long: uncharacterized protein (73 aa).

This is an uncharacterized protein from Saccharomyces cerevisiae (strain ATCC 204508 / S288c) (Baker's yeast).